We begin with the raw amino-acid sequence, 379 residues long: MDNINGLPDDLLVKILSFVPTYVAVSTCVLSKRWEFLWMWLPNLEFVSPWDSRPGIVDFINKKLPIHRAPVIERLCIHINSNPHIKPEYIKRWIEIAVSHYVRELQIDYHSKTKITLQLEAESYFIDGKYLQQLISGCPVLEDLSLRFCCNDNLREFTVIIPSLQSLSLFLFGNSNLNRYKIDTPSLKYLKLEDWNDPEHYSWTNMPKLREAYVDVESSNHLKTLIGSITSVKHLTICCLEDYLYGDGFIFNHLEHLKLCMCPFDSSNLLGQLLKGSPNLQVLDIFEMKRNDIVCWNQPSSVLECLLSSLKILNWSAYFGRPQDRDIAVYILKNACHLKTATFLTDKRINDVRRLKMIKELRLSPRASSTCQLVFGEDF.

The 47-residue stretch at 1 to 47 (MDNINGLPDDLLVKILSFVPTYVAVSTCVLSKRWEFLWMWLPNLEFV) folds into the F-box domain. Residues 295–345 (CWNQPSSVLECLLSSLKILNWSAYFGRPQDRDIAVYILKNACHLKTATFLT) enclose the FBD domain.

The protein is Putative FBD-associated F-box protein At5g38570 of Arabidopsis thaliana (Mouse-ear cress).